We begin with the raw amino-acid sequence, 607 residues long: Elongation factor 4 (607 aa).

The region spanning 11-193 (EKIRNFSIIA…QIVEKVPAPT (183 aa)) is the tr-type G domain. GTP-binding positions include 23-28 (DHGKST) and 140-143 (NKID).

It belongs to the TRAFAC class translation factor GTPase superfamily. Classic translation factor GTPase family. LepA subfamily.

Its subcellular location is the cell membrane. The enzyme catalyses GTP + H2O = GDP + phosphate + H(+). In terms of biological role, required for accurate and efficient protein synthesis under certain stress conditions. May act as a fidelity factor of the translation reaction, by catalyzing a one-codon backward translocation of tRNAs on improperly translocated ribosomes. Back-translocation proceeds from a post-translocation (POST) complex to a pre-translocation (PRE) complex, thus giving elongation factor G a second chance to translocate the tRNAs correctly. Binds to ribosomes in a GTP-dependent manner. This chain is Elongation factor 4, found in Streptococcus pneumoniae (strain P1031).